The primary structure comprises 254 residues: Putative ankyrin-containing lipoprotein Lxx09580 (254 aa).

Residues 1-22 form the signal peptide; the sequence is MTEIRYVRLLTLVLASSVLLAG. C23 carries the N-palmitoyl cysteine lipid modification. The S-diacylglycerol cysteine moiety is linked to residue C23. 5 ANK repeats span residues 56 to 85, 89 to 118, 122 to 151, 155 to 184, and 188 to 222; these read AATA…AIED, GGRT…DVNA, IQDS…DVNA, FNGT…DLDH, and PGWT…NPDI.

It is found in the cell membrane. The polypeptide is Putative ankyrin-containing lipoprotein Lxx09580 (Leifsonia xyli subsp. xyli (strain CTCB07)).